Here is an 861-residue protein sequence, read N- to C-terminus: DNA mismatch repair protein MutS (861 aa).

Gly-618–Ser-625 provides a ligand contact to ATP.

It belongs to the DNA mismatch repair MutS family.

In terms of biological role, this protein is involved in the repair of mismatches in DNA. It is possible that it carries out the mismatch recognition step. This protein has a weak ATPase activity. This chain is DNA mismatch repair protein MutS, found in Shewanella sp. (strain MR-7).